Reading from the N-terminus, the 360-residue chain is Ribosomal RNA large subunit methyltransferase M (360 aa).

Residues Ser-187, 220–223 (CPGG), Asp-239, Asp-259, and Asp-276 each bind S-adenosyl-L-methionine. The active-site Proton acceptor is the Lys-305.

Belongs to the class I-like SAM-binding methyltransferase superfamily. RNA methyltransferase RlmE family. RlmM subfamily. As to quaternary structure, monomer.

It is found in the cytoplasm. The enzyme catalyses cytidine(2498) in 23S rRNA + S-adenosyl-L-methionine = 2'-O-methylcytidine(2498) in 23S rRNA + S-adenosyl-L-homocysteine + H(+). Catalyzes the 2'-O-methylation at nucleotide C2498 in 23S rRNA. This Shewanella halifaxensis (strain HAW-EB4) protein is Ribosomal RNA large subunit methyltransferase M.